Here is a 412-residue protein sequence, read N- to C-terminus: Short-chain specific acyl-CoA dehydrogenase, mitochondrial (412 aa).

The N-terminal 24 residues, 1 to 24, are a transit peptide targeting the mitochondrion; the sequence is MAAALLARARGPLRRALGVRDWRR. Position 27 is a phosphothreonine (Thr27). Lys51 carries the N6-acetyllysine; alternate modification. Residue Lys51 is modified to N6-succinyllysine; alternate. At Lys72 the chain carries N6-acetyllysine. Residue Lys129 is modified to N6-acetyllysine; alternate. Lys129 is subject to N6-succinyllysine; alternate. FAD-binding positions include 152 to 161 and 185 to 187; these read FALSEPGNGS and WIT. Ser161 provides a ligand contact to substrate. Lys208 carries the N6-acetyllysine modification. N6-acetyllysine; alternate is present on Lys262. At Lys262 the chain carries N6-succinyllysine; alternate. 269 to 272 lines the substrate pocket; it reads DMGR. Residue Lys292 is modified to N6-acetyllysine. Residue Arg297 coordinates FAD. Lys306 is subject to N6-acetyllysine; alternate. Lys306 is subject to N6-succinyllysine; alternate. FAD contacts are provided by residues Gln308 and 365 to 369; that span reads QILGG. Glu392 acts as the Proton acceptor in catalysis. Residue Gly393 participates in substrate binding. 394–396 contributes to the FAD binding site; the sequence is TSE.

Belongs to the acyl-CoA dehydrogenase family. Homotetramer. Requires FAD as cofactor.

It localises to the mitochondrion matrix. The enzyme catalyses a short-chain 2,3-saturated fatty acyl-CoA + oxidized [electron-transfer flavoprotein] + H(+) = a short-chain (2E)-enoyl-CoA + reduced [electron-transfer flavoprotein]. The catalysed reaction is butanoyl-CoA + oxidized [electron-transfer flavoprotein] + H(+) = (2E)-butenoyl-CoA + reduced [electron-transfer flavoprotein]. It catalyses the reaction pentanoyl-CoA + oxidized [electron-transfer flavoprotein] + H(+) = (2E)-pentenoyl-CoA + reduced [electron-transfer flavoprotein]. It carries out the reaction hexanoyl-CoA + oxidized [electron-transfer flavoprotein] + H(+) = (2E)-hexenoyl-CoA + reduced [electron-transfer flavoprotein]. The protein operates within lipid metabolism; mitochondrial fatty acid beta-oxidation. Functionally, short-chain specific acyl-CoA dehydrogenase is one of the acyl-CoA dehydrogenases that catalyze the first step of mitochondrial fatty acid beta-oxidation, an aerobic process breaking down fatty acids into acetyl-CoA and allowing the production of energy from fats. The first step of fatty acid beta-oxidation consists in the removal of one hydrogen from C-2 and C-3 of the straight-chain fatty acyl-CoA thioester, resulting in the formation of trans-2-enoyl-CoA. Among the different mitochondrial acyl-CoA dehydrogenases, short-chain specific acyl-CoA dehydrogenase acts specifically on acyl-CoAs with saturated 4 to 6 carbons long primary chains. This Mus musculus (Mouse) protein is Short-chain specific acyl-CoA dehydrogenase, mitochondrial (Acads).